The chain runs to 620 residues: Chaperone protein HscA homolog (620 aa).

This sequence belongs to the heat shock protein 70 family.

Functionally, chaperone involved in the maturation of iron-sulfur cluster-containing proteins. Has a low intrinsic ATPase activity which is markedly stimulated by HscB. The polypeptide is Chaperone protein HscA homolog (Acinetobacter baylyi (strain ATCC 33305 / BD413 / ADP1)).